Consider the following 645-residue polypeptide: ATP-dependent DNA helicase Rep (645 aa).

The UvrD-like helicase ATP-binding domain occupies 1-280 (MSLNFSQKNA…IKMEHNYRSS (280 aa)). ATP contacts are provided by residues 22–29 (AGAGSGKT) and R278. Residues 281-562 (GRILKAANSL…QLMTLHASKG (282 aa)) enclose the UvrD-like helicase C-terminal domain.

Belongs to the helicase family. UvrD subfamily. Homodimer.

It catalyses the reaction Couples ATP hydrolysis with the unwinding of duplex DNA by translocating in the 3'-5' direction.. It carries out the reaction ATP + H2O = ADP + phosphate + H(+). In terms of biological role, rep helicase is a single-stranded DNA-dependent ATPase involved in DNA replication; it can initiate unwinding at a nick in the DNA. It binds to the single-stranded DNA and acts in a progressive fashion along the DNA in the 3' to 5' direction. The polypeptide is ATP-dependent DNA helicase Rep (Buchnera aphidicola subsp. Acyrthosiphon pisum (strain APS) (Acyrthosiphon pisum symbiotic bacterium)).